A 728-amino-acid chain; its full sequence is Tripartite terminase subunit 1 (728 aa).

A C3H1-type zinc finger spans residues 186 to 214 (CASCFAEAAMLPNQGESVLSMLAAVNCNH). The disordered stretch occupies residues 239-278 (ARAAGRAGGGRESERRGREDADDEEDDEEEPRDGQGDAGD). The segment covering 247–257 (GGRESERRGRE) has biased composition (basic and acidic residues). Positions 258 to 269 (DADDEEDDEEEP) are enriched in acidic residues. 653 to 660 (YNRVWEKS) contacts ATP.

Belongs to the herpesviridae TRM1 protein family. In terms of assembly, associates with TRM2 and TRM3 to form the tripartite terminase complex. Interacts with portal protein.

It localises to the host nucleus. Component of the molecular motor that translocates viral genomic DNA in empty capsid during DNA packaging. Forms a tripartite terminase complex together with TRM2 and TRM3 in the host cytoplasm. Once the complex reaches the host nucleus, it interacts with the capsid portal vertex. This portal forms a ring in which genomic DNA is translocated into the capsid. TRM1 carries an endonuclease activity that plays an important role for the cleavage of concatemeric viral DNA into unit length genomes. This is Tripartite terminase subunit 1 from Equine herpesvirus 2 (strain 86/87) (EHV-2).